The following is an 81-amino-acid chain: Photosystem I iron-sulfur center (81 aa).

4Fe-4S ferredoxin-type domains are found at residues 2–31 and 39–68; these read SHSV…MIPW and IAPA…VRVY. [4Fe-4S] cluster contacts are provided by Cys-11, Cys-14, Cys-17, Cys-21, Cys-48, Cys-51, Cys-54, and Cys-58.

As to quaternary structure, the eukaryotic PSI reaction center is composed of at least 11 subunits. It depends on [4Fe-4S] cluster as a cofactor.

The protein localises to the plastid. It localises to the chloroplast thylakoid membrane. The catalysed reaction is reduced [plastocyanin] + hnu + oxidized [2Fe-2S]-[ferredoxin] = oxidized [plastocyanin] + reduced [2Fe-2S]-[ferredoxin]. Apoprotein for the two 4Fe-4S centers FA and FB of photosystem I (PSI); essential for photochemical activity. FB is the terminal electron acceptor of PSI, donating electrons to ferredoxin. The C-terminus interacts with PsaA/B/D and helps assemble the protein into the PSI complex. Required for binding of PsaD and PsaE to PSI. PSI is a plastocyanin-ferredoxin oxidoreductase, converting photonic excitation into a charge separation, which transfers an electron from the donor P700 chlorophyll pair to the spectroscopically characterized acceptors A0, A1, FX, FA and FB in turn. The sequence is that of Photosystem I iron-sulfur center from Chloranthus spicatus (Chulantree).